The sequence spans 644 residues: Macrolide export ATP-binding/permease protein MacB (644 aa).

The region spanning I4 to A242 is the ABC transporter domain. Residue G40 to S47 participates in ATP binding. Helical transmembrane passes span L270–G290, I524–V544, L574–F594, and A607–M627.

Belongs to the ABC transporter superfamily. Macrolide exporter (TC 3.A.1.122) family. Homodimer.

Its subcellular location is the cell inner membrane. Non-canonical ABC transporter that contains transmembrane domains (TMD), which form a pore in the inner membrane, and an ATP-binding domain (NBD), which is responsible for energy generation. Confers resistance against macrolides. This is Macrolide export ATP-binding/permease protein MacB from Neisseria gonorrhoeae (strain ATCC 700825 / FA 1090).